The following is a 1293-amino-acid chain: Phosphoribosylformylglycinamidine synthase (1293 aa).

Residues 305-316 (GAATGSGGEIRD), 384-386 (TGY), and Ala-676 each bind ATP. The tract at residues 307–326 (ATGSGGEIRDEGATGRGSKP) is disordered. Residues Asp-677, Glu-716, Asn-720, and Asp-884 each coordinate Mg(2+). Ser-886 is a binding site for ATP. Residues 1040 to 1293 (MAILREQGVN…MFRNARVKIG (254 aa)) enclose the Glutamine amidotransferase type-1 domain. Cys-1133 acts as the Nucleophile in catalysis. Residues His-1258 and Glu-1260 contribute to the active site.

This sequence in the N-terminal section; belongs to the FGAMS family. In terms of assembly, monomer.

Its subcellular location is the cytoplasm. The enzyme catalyses N(2)-formyl-N(1)-(5-phospho-beta-D-ribosyl)glycinamide + L-glutamine + ATP + H2O = 2-formamido-N(1)-(5-O-phospho-beta-D-ribosyl)acetamidine + L-glutamate + ADP + phosphate + H(+). The protein operates within purine metabolism; IMP biosynthesis via de novo pathway; 5-amino-1-(5-phospho-D-ribosyl)imidazole from N(2)-formyl-N(1)-(5-phospho-D-ribosyl)glycinamide: step 1/2. Phosphoribosylformylglycinamidine synthase involved in the purines biosynthetic pathway. Catalyzes the ATP-dependent conversion of formylglycinamide ribonucleotide (FGAR) and glutamine to yield formylglycinamidine ribonucleotide (FGAM) and glutamate. This Shewanella frigidimarina (strain NCIMB 400) protein is Phosphoribosylformylglycinamidine synthase.